Consider the following 249-residue polypeptide: Mannose-binding protein A (249 aa).

Positions 1–20 are cleaved as a signal peptide; sequence MLLFSSLPVLLLCVVTASYS. The tract at residues 41-102 is disordered; it reads VTNGTPGRDG…KGDPGDTSGV (62 aa). Residues 48 to 60 are compositionally biased toward basic and acidic residues; it reads RDGRDGPKGEKGE. Pro-54 carries the 4-hydroxyproline modification. 2 positions are modified to 5-hydroxylysine: Lys-55 and Lys-58. Residues Lys-55 and Lys-58 are each glycosylated (O-linked (Gal...) hydroxylysine). Pro-61, Pro-72, Pro-78, and Pro-89 each carry 4-hydroxyproline. The Collagen-like domain maps to 64-98; the sequence is GFRGSQGPPGKMGPPGNIGETGPLGPKGQKGDPGD. Residues Lys-90 and Lys-93 each carry the 5-hydroxylysine modification. Residues Lys-90 and Lys-93 are each glycosylated (O-linked (Gal...) hydroxylysine). Residues 135–246 form the C-type lectin domain; sequence SRKKLYVTNG…CSSSFLAVCE (112 aa). 2 cysteine pairs are disulfide-bonded: Cys-156/Cys-245 and Cys-223/Cys-237. Ca(2+)-binding residues include Asp-189, Glu-193, Glu-213, Asn-215, Asp-216, Glu-221, Asp-222, Asn-233, and Asp-234. The tract at residues 213 to 221 is calcium-dependent carbohydrate binding; it reads EPNDHGSGE.

Interacts with MASP1 and MASP2. Forms oligomeric complexes of 3, 4, 5 or, predominantly, 6 homotrimers. The homotrimers appear as globular heads that are connected to a central hub by thin stalks. Hydroxylated on lysine and proline residues within the collagen-like domain. Post-translationally, O-glycosylated. O-linked glycans on hydroxylysine residues consist of Glc-Gal disaccharides bound to the oxygen atom of post-translationally added hydroxyl groups. As to expression, detected in blood serum (at protein level). Expressed in liver. Weakly expressed in lung, testis and brain. Not detected in bone marrow and heart.

The protein localises to the secreted. Functionally, calcium-dependent lectin. Plays a role in the innate immune response by binding mannose, fucose and N-acetylglucosamine on bacteria, including strains of A.suis, H.parasuis and A.pleuropneumoniae, and activates the lectin complement pathway. According to some authors, it only binds mannose. The sequence is that of Mannose-binding protein A from Sus scrofa (Pig).